Here is a 202-residue protein sequence, read N- to C-terminus: Casparian strip membrane protein 1 (202 aa).

The span at 1–13 (MEKSESSTIQIAE) shows a compositional bias: polar residues. Positions 1–30 (MEKSESSTIQIAESSKDRKGKAPLLPPPVH) are disordered. Topologically, residues 1 to 42 (MEKSESSTIQIAESSKDRKGKAPLLPPPVHHERAAGYKRGVA) are cytoplasmic. A helical membrane pass occupies residues 43–63 (IFDLILRISAATAALAATIVM). The Extracellular portion of the chain corresponds to 64–90 (GTTEQTLPFFTQFFQFRASYDDLPTFT). Residues 91-111 (FFVIAMAIVTGYLILSVPFSI) traverse the membrane as a helical segment. Residues 112–130 (VCIARPVVAAPRILLILCD) lie on the Cytoplasmic side of the membrane. The chain crosses the membrane as a helical span at residues 131–151 (TLTVTLATSAAGASAAIVYLA). The Extracellular portion of the chain corresponds to 152-177 (HNGXSDANWLAICQQFNDFCQRVSGA). Residues 178–198 (VVAAFVSAVLLIFLVVLSAIV) traverse the membrane as a helical segment. At 199–202 (LKKH) the chain is on the cytoplasmic side.

The protein belongs to the Casparian strip membrane proteins (CASP) family. Homodimer and heterodimers.

It is found in the cell membrane. In terms of biological role, regulates membrane-cell wall junctions and localized cell wall deposition. Required for establishment of the Casparian strip membrane domain (CSD) and the subsequent formation of Casparian strips, a cell wall modification of the root endodermis that determines an apoplastic barrier between the intraorganismal apoplasm and the extraorganismal apoplasm and prevents lateral diffusion. The protein is Casparian strip membrane protein 1 of Triphysaria pusilla (Dwarf owl's-clover).